Consider the following 468-residue polypeptide: Squamosa promoter-binding-like protein 5 (468 aa).

Residues 204 to 281 form an SBP-type zinc finger; sequence PPRCQAEGCK…TEHNRRRRKP (78 aa). Positions 207, 212, 229, 232, 248, 251, 255, and 267 each coordinate Zn(2+). The Bipartite nuclear localization signal signature appears at 264 to 280; sequence KRSCRKRLTEHNRRRRK. Disordered stretches follow at residues 270–305, 354–374, and 405–458; these read RLTE…DASI, TLSL…DGGL, and HHHL…SNNN. The span at 363-372 shows a compositional bias: acidic residues; sequence QEEDDEDEDG. Residues 438-458 show a composition bias toward low complexity; sequence NNNNILSCSSASDQQNSSNNN.

As to expression, ubiquitous.

The protein resides in the nucleus. Its function is as follows. Trans-acting factor that binds specifically to the consensus nucleotide sequence 5'-TNCGTACAA-3'. In Oryza sativa subsp. japonica (Rice), this protein is Squamosa promoter-binding-like protein 5 (SPL5).